A 102-amino-acid polypeptide reads, in one-letter code: NADH-quinone oxidoreductase subunit K (102 aa).

3 helical membrane-spanning segments follow: residues 5 to 25 (ITHY…GIFL), 31 to 51 (IIIL…FVAF), and 66 to 86 (FVLT…VVFF).

It belongs to the complex I subunit 4L family. As to quaternary structure, NDH-1 is composed of 14 different subunits. Subunits NuoA, H, J, K, L, M, N constitute the membrane sector of the complex.

The protein localises to the cell inner membrane. The catalysed reaction is a quinone + NADH + 5 H(+)(in) = a quinol + NAD(+) + 4 H(+)(out). NDH-1 shuttles electrons from NADH, via FMN and iron-sulfur (Fe-S) centers, to quinones in the respiratory chain. The immediate electron acceptor for the enzyme in this species is believed to be ubiquinone. Couples the redox reaction to proton translocation (for every two electrons transferred, four hydrogen ions are translocated across the cytoplasmic membrane), and thus conserves the redox energy in a proton gradient. The chain is NADH-quinone oxidoreductase subunit K from Bartonella tribocorum (strain CIP 105476 / IBS 506).